A 273-amino-acid polypeptide reads, in one-letter code: Undecaprenyl-diphosphatase (273 aa).

Transmembrane regions (helical) follow at residues 39–59 (SGLT…VVYF), 86–106 (LPFL…LFET), 117–137 (LLIG…DLFG), 146–166 (VTVS…IPGV), 189–209 (FSFL…MLHL), 220–240 (LPLA…VAFL), and 249–269 (IAPF…VILT).

The protein belongs to the UppP family.

Its subcellular location is the cell inner membrane. The enzyme catalyses di-trans,octa-cis-undecaprenyl diphosphate + H2O = di-trans,octa-cis-undecaprenyl phosphate + phosphate + H(+). Catalyzes the dephosphorylation of undecaprenyl diphosphate (UPP). Confers resistance to bacitracin. This chain is Undecaprenyl-diphosphatase, found in Pelobacter propionicus (strain DSM 2379 / NBRC 103807 / OttBd1).